Here is a 329-residue protein sequence, read N- to C-terminus: Phenylalanine--tRNA ligase alpha subunit (329 aa).

Glu-254 is a binding site for Mg(2+).

Belongs to the class-II aminoacyl-tRNA synthetase family. Phe-tRNA synthetase alpha subunit type 1 subfamily. In terms of assembly, tetramer of two alpha and two beta subunits. Mg(2+) serves as cofactor.

It is found in the cytoplasm. It carries out the reaction tRNA(Phe) + L-phenylalanine + ATP = L-phenylalanyl-tRNA(Phe) + AMP + diphosphate + H(+). The polypeptide is Phenylalanine--tRNA ligase alpha subunit (Histophilus somni (strain 129Pt) (Haemophilus somnus)).